The primary structure comprises 408 residues: CinA-like protein (408 aa).

The protein belongs to the CinA family.

This chain is CinA-like protein, found in Fervidobacterium nodosum (strain ATCC 35602 / DSM 5306 / Rt17-B1).